A 172-amino-acid chain; its full sequence is General stress protein 18 (172 aa).

The PfpI endopeptidase domain occupies 3–171 (KKIAVVLTYY…FNRESLALLE (169 aa)). Catalysis depends on C104, which acts as the Nucleophile. H105 is an active-site residue.

It belongs to the peptidase C56 family.

Functionally, functions in the protection against aldehyde-stress, possibly by degrading damaged proteins. This chain is General stress protein 18 (yfkM), found in Bacillus subtilis (strain 168).